The sequence spans 423 residues: Glycine amidinotransferase, mitochondrial (423 aa).

The transit peptide at 1–43 (MLRVRCLRGGSRGAEALHYIGSRLGRTVTGWVQRTFQSTQAAT) directs the protein to the mitochondrion. S46 and S49 each carry phosphoserine. Arginine is bound at residue D170. Catalysis depends on residues D254 and H303. Arginine contacts are provided by D305, R322, S354, and S355. Position 385 is an N6-acetyllysine (K385). C407 functions as the Amidino-cysteine intermediate in the catalytic mechanism.

Belongs to the amidinotransferase family. As to quaternary structure, homodimer. Kidney. Expressed biallelically in placenta.

The protein localises to the mitochondrion inner membrane. It catalyses the reaction L-arginine + glycine = guanidinoacetate + L-ornithine. The enzyme catalyses 4-aminobutanoate + L-arginine = 4-guanidinobutanoate + L-ornithine. The catalysed reaction is beta-alanine + L-arginine = 3-guanidinopropanoate + L-ornithine. It carries out the reaction taurine + L-arginine = taurocyamine + L-ornithine. Its pathway is amine and polyamine biosynthesis; creatine biosynthesis; creatine from L-arginine and glycine: step 1/2. Functionally, transamidinase that catalyzes the transfer of the amidino group of L-arginine onto the amino moiety of acceptor metabolites such as glycine, beta-alanine, gamma-aminobutyric acid (GABA) and taurine yielding the corresponding guanidine derivatives. Catalyzes the rate-limiting step of creatine biosynthesis, namely the transfer of the amidino group from L-arginine to glycine to generate guanidinoacetate, which is then methylated by GAMT to form creatine. Provides creatine as a source for ATP generation in tissues with high energy demands, in particular skeletal muscle, heart and brain. The chain is Glycine amidinotransferase, mitochondrial (GATM) from Sus scrofa (Pig).